The chain runs to 380 residues: Cytochrome b (380 aa).

Helical transmembrane passes span 34 to 54, 78 to 99, 114 to 134, and 179 to 199; these read FGSL…LLAM, WLIR…FLHI, WNTG…GYVL, and FFAL…VHLT. Heme b is bound by residues His-84 and His-98. Positions 183 and 197 each coordinate heme b. Residue His-202 coordinates a ubiquinone. Transmembrane regions (helical) follow at residues 227–247, 289–309, 321–341, and 348–368; these read LKDI…ALFS, LGGV…PFLH, LSQT…WIGS, and FMII…ILFP.

Belongs to the cytochrome b family. As to quaternary structure, the cytochrome bc1 complex contains 11 subunits: 3 respiratory subunits (MT-CYB, CYC1 and UQCRFS1), 2 core proteins (UQCRC1 and UQCRC2) and 6 low-molecular weight proteins (UQCRH/QCR6, UQCRB/QCR7, UQCRQ/QCR8, UQCR10/QCR9, UQCR11/QCR10 and a cleavage product of UQCRFS1). This cytochrome bc1 complex then forms a dimer. Heme b is required as a cofactor.

It is found in the mitochondrion inner membrane. Its function is as follows. Component of the ubiquinol-cytochrome c reductase complex (complex III or cytochrome b-c1 complex) that is part of the mitochondrial respiratory chain. The b-c1 complex mediates electron transfer from ubiquinol to cytochrome c. Contributes to the generation of a proton gradient across the mitochondrial membrane that is then used for ATP synthesis. This Gallus lafayettii (Sri Lanka junglefowl) protein is Cytochrome b (MT-CYB).